Reading from the N-terminus, the 359-residue chain is Type-1 angiotensin II receptor (359 aa).

Residues 1 to 25 lie on the Extracellular side of the membrane; sequence MVPNYSTEETVKRIHVDCPVSGRHS. A glycan (N-linked (GlcNAc...) asparagine) is linked at N4. Angiotensin II is bound at residue D17. Disulfide bonds link C18-C274 and C101-C180. Residues 26-55 form a helical membrane-spanning segment; that stretch reads YIYIMVPTVYSIIFIIGIFGNSLVVIVIYC. Over 56–61 the chain is Cytoplasmic; the sequence is YMKLKT. A helical membrane pass occupies residues 62-89; it reads VASIFLLNLALADLCFLITLPLWAAYTA. The Extracellular segment spans residues 90–98; sequence MEYQWPFGN. A helical membrane pass occupies residues 99–125; the sequence is CLCKLASAGISFNLYASVFLLTCLSID. Topologically, residues 126–141 are cytoplasmic; the sequence is RYLAIVHPVKSRIRRT. The chain crosses the membrane as a helical span at residues 142–165; sequence MFVARVTCIVIWLLAGVASLPVII. Topologically, residues 166–190 are extracellular; it reads HRNIFFAENLNMTVCGFRYDNNNTT. R167 is an angiotensin II binding site. N176 carries N-linked (GlcNAc...) asparagine glycosylation. Residues F182 and Y184 each contribute to the angiotensin II site. N-linked (GlcNAc...) asparagine glycans are attached at residues N187 and N188. Residues 191 to 216 form a helical membrane-spanning segment; it reads LRVGLGLSKNLLGFLIPFLIILTSYT. K199 provides a ligand contact to angiotensin II. Topologically, residues 217 to 239 are cytoplasmic; sequence LIWKTLKKAYQIQRNKTRNDDIF. Residues 240–268 traverse the membrane as a helical segment; the sequence is KMIVAIVFFFFFSWIPHQVFTFLDVLIQL. Residues 269–278 lie on the Extracellular side of the membrane; sequence HVITDCKITD. The chain crosses the membrane as a helical span at residues 279–304; sequence IVDTAMPFTICIAYFNNCLNPFFYVF. Residues 305 to 359 are Cytoplasmic-facing; the sequence is FGKNFKKYFLQLIKYIPPNVSTHPSLTTKMSSLSYRPPENIRLPTKKTAGSFDTE.

It belongs to the G-protein coupled receptor 1 family. Post-translationally, C-terminal Ser or Thr residues may be phosphorylated. As to expression, adrenal medulla.

It is found in the cell membrane. In terms of biological role, receptor for angiotensin II, a vasoconstricting peptide, which acts as a key regulator of blood pressure and sodium retention by the kidney. The activated receptor in turn couples to G-alpha proteins G(q) (GNAQ, GNA11, GNA14 or GNA15) and thus activates phospholipase C and increases the cytosolic Ca(2+) concentrations, which in turn triggers cellular responses such as stimulation of protein kinase C. The polypeptide is Type-1 angiotensin II receptor (AGTR1) (Meleagris gallopavo (Wild turkey)).